Reading from the N-terminus, the 295-residue chain is Probable cell division protein WhiA (295 aa).

The segment at residues 262 to 293 (SLRELGKKLNLTKSQIYSKLKRIIKIAERFGD) is a DNA-binding region (H-T-H motif).

This sequence belongs to the WhiA family.

Its function is as follows. Involved in cell division and chromosome segregation. This Thermotoga maritima (strain ATCC 43589 / DSM 3109 / JCM 10099 / NBRC 100826 / MSB8) protein is Probable cell division protein WhiA.